A 400-amino-acid polypeptide reads, in one-letter code: Tyrosine--tRNA ligase (400 aa).

The short motif at 42 to 51 (PTAPDLHLGH) is the 'HIGH' region element. Positions 226 to 230 (KMSKS) match the 'KMSKS' region motif. Lysine 229 lines the ATP pocket. The 61-residue stretch at 339–399 (FSISYILRRA…GKKKIAQIFV (61 aa)) folds into the S4 RNA-binding domain.

It belongs to the class-I aminoacyl-tRNA synthetase family. TyrS type 2 subfamily. As to quaternary structure, homodimer.

Its subcellular location is the cytoplasm. The enzyme catalyses tRNA(Tyr) + L-tyrosine + ATP = L-tyrosyl-tRNA(Tyr) + AMP + diphosphate + H(+). In terms of biological role, catalyzes the attachment of tyrosine to tRNA(Tyr) in a two-step reaction: tyrosine is first activated by ATP to form Tyr-AMP and then transferred to the acceptor end of tRNA(Tyr). This chain is Tyrosine--tRNA ligase, found in Hahella chejuensis (strain KCTC 2396).